A 402-amino-acid chain; its full sequence is Argininosuccinate synthase (402 aa).

Residues 10-18 and alanine 37 each bind ATP; that span reads AYSGGLDTS. L-citrulline is bound by residues tyrosine 88 and serine 93. Glycine 118 is a binding site for ATP. L-aspartate-binding residues include threonine 120, asparagine 124, and aspartate 125. Position 124 (asparagine 124) interacts with L-citrulline. Positions 128, 179, 188, 264, and 276 each coordinate L-citrulline.

Belongs to the argininosuccinate synthase family. Type 1 subfamily. Homotetramer.

The protein resides in the cytoplasm. It carries out the reaction L-citrulline + L-aspartate + ATP = 2-(N(omega)-L-arginino)succinate + AMP + diphosphate + H(+). Its pathway is amino-acid biosynthesis; L-arginine biosynthesis; L-arginine from L-ornithine and carbamoyl phosphate: step 2/3. This Alkalilimnicola ehrlichii (strain ATCC BAA-1101 / DSM 17681 / MLHE-1) protein is Argininosuccinate synthase.